We begin with the raw amino-acid sequence, 237 residues long: Ribosomal RNA small subunit methyltransferase G (237 aa).

S-adenosyl-L-methionine is bound by residues Gly78, Phe83, 129 to 130, and Arg148; that span reads AE. The disordered stretch occupies residues 216–237; it reads SKKKETPNKYPRKAGTPNKKPL.

Belongs to the methyltransferase superfamily. RNA methyltransferase RsmG family.

The protein localises to the cytoplasm. In terms of biological role, specifically methylates the N7 position of a guanine in 16S rRNA. The protein is Ribosomal RNA small subunit methyltransferase G of Streptococcus agalactiae serotype Ia (strain ATCC 27591 / A909 / CDC SS700).